We begin with the raw amino-acid sequence, 231 residues long: Cytochrome c oxidase subunit 2 (231 aa).

The Mitochondrial intermembrane portion of the chain corresponds to 1 to 14 (MAHPVHVGLKEATS). The helical transmembrane segment at 15–45 (PFMEELIAFHDHTLMIIFLISSLVLYIISMM) threads the bilayer. At 46–59 (LTTKLTHTSTMNAQ) the chain is on the mitochondrial matrix side. Residues 60–87 (EIEIIWTILPAIILIMIALPSLRILYMT) form a helical membrane-spanning segment. The Mitochondrial intermembrane segment spans residues 88-231 (DEFNKPYLTL…WASYLYIVSL (144 aa)). Cu cation is bound by residues His-161, Cys-196, Glu-198, Cys-200, His-204, and Met-207. Position 198 (Glu-198) interacts with Mg(2+).

The protein belongs to the cytochrome c oxidase subunit 2 family. In terms of assembly, component of the cytochrome c oxidase (complex IV, CIV), a multisubunit enzyme composed of 14 subunits. The complex is composed of a catalytic core of 3 subunits MT-CO1, MT-CO2 and MT-CO3, encoded in the mitochondrial DNA, and 11 supernumerary subunits COX4I, COX5A, COX5B, COX6A, COX6B, COX6C, COX7A, COX7B, COX7C, COX8 and NDUFA4, which are encoded in the nuclear genome. The complex exists as a monomer or a dimer and forms supercomplexes (SCs) in the inner mitochondrial membrane with NADH-ubiquinone oxidoreductase (complex I, CI) and ubiquinol-cytochrome c oxidoreductase (cytochrome b-c1 complex, complex III, CIII), resulting in different assemblies (supercomplex SCI(1)III(2)IV(1) and megacomplex MCI(2)III(2)IV(2)). Found in a complex with TMEM177, COA6, COX18, COX20, SCO1 and SCO2. Interacts with TMEM177 in a COX20-dependent manner. Interacts with COX20. Interacts with COX16. Requires Cu cation as cofactor.

Its subcellular location is the mitochondrion inner membrane. It carries out the reaction 4 Fe(II)-[cytochrome c] + O2 + 8 H(+)(in) = 4 Fe(III)-[cytochrome c] + 2 H2O + 4 H(+)(out). Functionally, component of the cytochrome c oxidase, the last enzyme in the mitochondrial electron transport chain which drives oxidative phosphorylation. The respiratory chain contains 3 multisubunit complexes succinate dehydrogenase (complex II, CII), ubiquinol-cytochrome c oxidoreductase (cytochrome b-c1 complex, complex III, CIII) and cytochrome c oxidase (complex IV, CIV), that cooperate to transfer electrons derived from NADH and succinate to molecular oxygen, creating an electrochemical gradient over the inner membrane that drives transmembrane transport and the ATP synthase. Cytochrome c oxidase is the component of the respiratory chain that catalyzes the reduction of oxygen to water. Electrons originating from reduced cytochrome c in the intermembrane space (IMS) are transferred via the dinuclear copper A center (CU(A)) of subunit 2 and heme A of subunit 1 to the active site in subunit 1, a binuclear center (BNC) formed by heme A3 and copper B (CU(B)). The BNC reduces molecular oxygen to 2 water molecules using 4 electrons from cytochrome c in the IMS and 4 protons from the mitochondrial matrix. The sequence is that of Cytochrome c oxidase subunit 2 (MT-CO2) from Brachyteles hypoxanthus (Northern muriqui).